A 259-amino-acid polypeptide reads, in one-letter code: Ribonuclease PH (259 aa).

Residues Arg88 and 126–128 contribute to the phosphate site; that span reads GTR.

The protein belongs to the RNase PH family. As to quaternary structure, homohexameric ring arranged as a trimer of dimers.

It catalyses the reaction tRNA(n+1) + phosphate = tRNA(n) + a ribonucleoside 5'-diphosphate. Phosphorolytic 3'-5' exoribonuclease that plays an important role in tRNA 3'-end maturation. Removes nucleotide residues following the 3'-CCA terminus of tRNAs; can also add nucleotides to the ends of RNA molecules by using nucleoside diphosphates as substrates, but this may not be physiologically important. Probably plays a role in initiation of 16S rRNA degradation (leading to ribosome degradation) during starvation. The sequence is that of Ribonuclease PH from Mycolicibacterium paratuberculosis (strain ATCC BAA-968 / K-10) (Mycobacterium paratuberculosis).